The sequence spans 251 residues: Triosephosphate isomerase (251 aa).

9–11 is a binding site for substrate; the sequence is NWK. The active-site Electrophile is the histidine 95. Glutamate 167 functions as the Proton acceptor in the catalytic mechanism. Residues glycine 173, serine 213, and 234-235 each bind substrate; that span reads GG. Serine 213 carries the post-translational modification Phosphoserine.

Belongs to the triosephosphate isomerase family. As to quaternary structure, homodimer.

The protein localises to the cytoplasm. It carries out the reaction D-glyceraldehyde 3-phosphate = dihydroxyacetone phosphate. Its pathway is carbohydrate biosynthesis; gluconeogenesis. The protein operates within carbohydrate degradation; glycolysis; D-glyceraldehyde 3-phosphate from glycerone phosphate: step 1/1. Involved in the gluconeogenesis. Catalyzes stereospecifically the conversion of dihydroxyacetone phosphate (DHAP) to D-glyceraldehyde-3-phosphate (G3P). This chain is Triosephosphate isomerase, found in Shouchella clausii (strain KSM-K16) (Alkalihalobacillus clausii).